Here is a 689-residue protein sequence, read N- to C-terminus: Calcium-responsive transcription factor (689 aa).

Disordered regions lie at residues 1 to 46 (MEQR…PTIL) and 541 to 609 (SPDG…SVPN). Residues 13-29 (DGEKSEREAQGFEHRTC) are compositionally biased toward basic and acidic residues. 2 stretches are compositionally biased toward polar residues: residues 541–559 (SPDG…SSSP) and 578–601 (LGQS…SSTG).

In terms of tissue distribution, highly expressed in brain and testis.

The protein localises to the nucleus. Acts as a transcriptional activator that mediates the calcium- and neuron-selective induction of BDNF exon III transcription. Binds to the consensus calcium-response element CaRE1 5'-CTATTTCGAG-3' sequence. The sequence is that of Calcium-responsive transcription factor (Carf) from Mus musculus (Mouse).